The primary structure comprises 330 residues: GTPase Obg (330 aa).

Residues 1-159 form the Obg domain; it reads MQFIDQARIT…WPLQLELKLL (159 aa). In terms of domain architecture, OBG-type G spans 160–328; sequence AEVGIIGLPN…LLERVWKELG (169 aa). ATP is bound by residues 166–173, 191–195, 213–216, 280–283, and 309–311; these read GLPNAGKS, FTTLV, DIPG, NKQE, and SAA. 2 residues coordinate Mg(2+): Ser173 and Thr193.

The protein belongs to the TRAFAC class OBG-HflX-like GTPase superfamily. OBG GTPase family. Monomer. Mg(2+) is required as a cofactor.

The protein resides in the cytoplasm. In terms of biological role, an essential GTPase which binds GTP, GDP and possibly (p)ppGpp with moderate affinity, with high nucleotide exchange rates and a fairly low GTP hydrolysis rate. Plays a role in control of the cell cycle, stress response, ribosome biogenesis and in those bacteria that undergo differentiation, in morphogenesis control. In Parasynechococcus marenigrum (strain WH8102), this protein is GTPase Obg.